The sequence spans 328 residues: Gonadotropin-releasing hormone receptor (328 aa).

The Extracellular segment spans residues 1–38 (MANRAYLEQKQTQCSIINSSFSMTHRDLPTLTLSGKIR). A glycan (N-linked (GlcNAc...) asparagine) is linked at N18. Residues 39 to 58 (VMVTFFLFLVSTAFNASFLM) traverse the membrane as a helical segment. Residues 59-77 (KLQRQTQKKEEVKKLTRMK) lie on the Cytoplasmic side of the membrane. A helical membrane pass occupies residues 78–97 (VLLKHLTLANLLETVIVMPL). Residues 98–115 (DGIWNVTVQWYAGEFLCK) are Extracellular-facing. Residue N102 is glycosylated (N-linked (GlcNAc...) asparagine). An intrachain disulfide couples C114 to C196. Residues 116–137 (ALSYLKLFSMYAPAFMMVVISL) form a helical membrane-spanning segment. At 138–164 (DRFLAITRPLAVKSNTKVGQSLIAVAW) the chain is on the cytoplasmic side. A helical membrane pass occupies residues 165-184 (FLSIVLAGPQLYIFRMIYVE). Over 185 to 212 (DISGQTGNFSQCVTHCSFPEWWQEAFYN) the chain is Extracellular. N192 carries an N-linked (GlcNAc...) asparagine glycan. A helical transmembrane segment spans residues 213 to 232 (LLTFSCLFIGPLLIMLVCNA). Over 233 to 281 (KIIFTLTQVLHQDPHELQLNRSKNNIPRARLRTLKMTVAFATLFTICWT) the chain is Cytoplasmic. A helical membrane pass occupies residues 282-300 (PYYVLGIWYWFDPEMLNRV). Residues 301-306 (SDPVNH) are Extracellular-facing. Residues 307 to 326 (FFFLFGLLNPCFDPLIYGYF) traverse the membrane as a helical segment. Residues 327-328 (SL) are Cytoplasmic-facing.

The protein belongs to the G-protein coupled receptor 1 family.

It localises to the cell membrane. In terms of biological role, receptor for gonadotropin releasing hormone (GnRH) that mediates the action of GnRH to stimulate the secretion of the gonadotropic hormones luteinizing hormone (LH) and follicle-stimulating hormone (FSH). This receptor mediates its action by association with G-proteins that activate a phosphatidylinositol-calcium second messenger system. This Trichosurus vulpecula (Brush-tailed possum) protein is Gonadotropin-releasing hormone receptor (GNRHR).